We begin with the raw amino-acid sequence, 292 residues long: uncharacterized protein (292 aa).

Residues 1–213 are disordered; it reads MTTAITPDKK…DQDDDDQKDL (213 aa). Composition is skewed to basic residues over residues 27-43 and 50-78; these read TKPRRSSKTSKKRKSKK and AKKRKTKRSKKSAKRTKRSAPKKAPKKAP. Residues 90–100 are compositionally biased toward polar residues; sequence QQAQASLQKPI. Over residues 116–134 the composition is skewed to pro residues; that stretch reads PRPPTPIPPTGVKPEPAPR. Residues 143 to 158 show a composition bias toward low complexity; that stretch reads SVSSTTPRTSATTGTT.

This is an uncharacterized protein from Caenorhabditis elegans.